The sequence spans 147 residues: Large ribosomal subunit protein uL15 (147 aa).

The segment covering 1-13 has biased composition (basic and acidic residues); that stretch reads MELHSLKAAEGSR. The disordered stretch occupies residues 1–57; it reads MELHSLKAAEGSRKVRNRVGRGTSSGNGKTSGRGQKGQKSRSGGGVRPGFEGGQTEL. Gly residues-rich tracts occupy residues 23 to 35 and 42 to 52; these read TSSGNGKTSGRGQ and SGGGVRPGFEG.

The protein belongs to the universal ribosomal protein uL15 family. As to quaternary structure, part of the 50S ribosomal subunit.

Functionally, binds to the 23S rRNA. This chain is Large ribosomal subunit protein uL15, found in Lactococcus lactis subsp. cremoris (strain MG1363).